Reading from the N-terminus, the 170-residue chain is Protein SprT (170 aa).

Positions 22 to 165 (LQLANQHLGT…RQCGEKLQFI (144 aa)) constitute a SprT-like domain. Zn(2+) is bound at residue His78. Glu79 is a catalytic residue. His82 contacts Zn(2+).

The protein belongs to the SprT family. Zn(2+) serves as cofactor.

It localises to the cytoplasm. This chain is Protein SprT, found in Yersinia pseudotuberculosis serotype IB (strain PB1/+).